Consider the following 1131-residue polypeptide: DNA polymerase II large subunit (1131 aa).

The protein belongs to the archaeal DNA polymerase II family. As to quaternary structure, heterodimer of a large subunit and a small subunit.

The catalysed reaction is DNA(n) + a 2'-deoxyribonucleoside 5'-triphosphate = DNA(n+1) + diphosphate. It carries out the reaction Exonucleolytic cleavage in the 3'- to 5'-direction to yield nucleoside 5'-phosphates.. Its function is as follows. Possesses two activities: a DNA synthesis (polymerase) and an exonucleolytic activity that degrades single-stranded DNA in the 3'- to 5'-direction. Has a template-primer preference which is characteristic of a replicative DNA polymerase. The chain is DNA polymerase II large subunit from Methanococcus maripaludis (strain C5 / ATCC BAA-1333).